The primary structure comprises 433 residues: 3-phosphoshikimate 1-carboxyvinyltransferase (433 aa).

3 residues coordinate 3-phosphoshikimate: Lys21, Ser22, and Arg26. Position 21 (Lys21) interacts with phosphoenolpyruvate. 2 residues coordinate phosphoenolpyruvate: Gly92 and Arg120. 4 residues coordinate 3-phosphoshikimate: Ser166, Gln168, Asp317, and Lys344. Gln168 lines the phosphoenolpyruvate pocket. Asp317 serves as the catalytic Proton acceptor. Phosphoenolpyruvate is bound by residues Arg348 and Arg391.

It belongs to the EPSP synthase family. Monomer.

It is found in the cytoplasm. The catalysed reaction is 3-phosphoshikimate + phosphoenolpyruvate = 5-O-(1-carboxyvinyl)-3-phosphoshikimate + phosphate. It functions in the pathway metabolic intermediate biosynthesis; chorismate biosynthesis; chorismate from D-erythrose 4-phosphate and phosphoenolpyruvate: step 6/7. Catalyzes the transfer of the enolpyruvyl moiety of phosphoenolpyruvate (PEP) to the 5-hydroxyl of shikimate-3-phosphate (S3P) to produce enolpyruvyl shikimate-3-phosphate and inorganic phosphate. In Caldicellulosiruptor saccharolyticus (strain ATCC 43494 / DSM 8903 / Tp8T 6331), this protein is 3-phosphoshikimate 1-carboxyvinyltransferase.